The following is a 234-amino-acid chain: Uridylate kinase (234 aa).

9 to 12 is an ATP binding site; that stretch reads KLSG. Position 51 (glycine 51) interacts with UMP. Residues glycine 52 and arginine 56 each coordinate ATP. Residues aspartate 71 and 132 to 139 contribute to the UMP site; that span reads CGNPFFTT. Positions 159, 165, and 168 each coordinate ATP.

This sequence belongs to the UMP kinase family. As to quaternary structure, homohexamer.

Its subcellular location is the cytoplasm. It catalyses the reaction UMP + ATP = UDP + ADP. It participates in pyrimidine metabolism; CTP biosynthesis via de novo pathway; UDP from UMP (UMPK route): step 1/1. Inhibited by UTP. In terms of biological role, catalyzes the reversible phosphorylation of UMP to UDP. The chain is Uridylate kinase from Prochlorococcus marinus (strain MIT 9312).